We begin with the raw amino-acid sequence, 361 residues long: Phosphoserine aminotransferase (361 aa).

Arginine 42 serves as a coordination point for L-glutamate. Residues alanine 76 to threonine 77, tryptophan 102, threonine 152, aspartate 172, and glutamine 195 contribute to the pyridoxal 5'-phosphate site. The residue at position 196 (lysine 196) is an N6-(pyridoxal phosphate)lysine. A pyridoxal 5'-phosphate-binding site is contributed by asparagine 237–threonine 238.

It belongs to the class-V pyridoxal-phosphate-dependent aminotransferase family. SerC subfamily. In terms of assembly, homodimer. The cofactor is pyridoxal 5'-phosphate.

The protein resides in the cytoplasm. It catalyses the reaction O-phospho-L-serine + 2-oxoglutarate = 3-phosphooxypyruvate + L-glutamate. The catalysed reaction is 4-(phosphooxy)-L-threonine + 2-oxoglutarate = (R)-3-hydroxy-2-oxo-4-phosphooxybutanoate + L-glutamate. It participates in amino-acid biosynthesis; L-serine biosynthesis; L-serine from 3-phospho-D-glycerate: step 2/3. Its pathway is cofactor biosynthesis; pyridoxine 5'-phosphate biosynthesis; pyridoxine 5'-phosphate from D-erythrose 4-phosphate: step 3/5. Functionally, catalyzes the reversible conversion of 3-phosphohydroxypyruvate to phosphoserine and of 3-hydroxy-2-oxo-4-phosphonooxybutanoate to phosphohydroxythreonine. The protein is Phosphoserine aminotransferase of Xanthomonas euvesicatoria pv. vesicatoria (strain 85-10) (Xanthomonas campestris pv. vesicatoria).